Here is a 366-residue protein sequence, read N- to C-terminus: Protein FAM110B (366 aa).

Disordered regions lie at residues 127–150, 163–182, and 214–253; these read SSEG…HRDT, KVYP…HVSR, and IPCS…PSLQ. Residues Ser-234 and Ser-297 each carry the phosphoserine modification. A disordered region spans residues 313 to 333; it reads DCEQSQDSNSDLRNDDSANDR. Positions 322–331 are enriched in basic and acidic residues; that stretch reads SDLRNDDSAN.

It belongs to the FAM110 family.

It is found in the cytoplasm. It localises to the cytoskeleton. The protein localises to the microtubule organizing center. Its subcellular location is the centrosome. In Rattus norvegicus (Rat), this protein is Protein FAM110B (Fam110b).